The primary structure comprises 513 residues: 2-isopropylmalate synthase (513 aa).

The region spanning 7 to 269 (VYIFDTTLRD…TTGIVTEELF (263 aa)) is the Pyruvate carboxyltransferase domain. Mn(2+)-binding residues include Asp16, His204, His206, and Asn240. Residues 393–513 (ALQFLSVHCG…KEEERTCPQL (121 aa)) are regulatory domain.

This sequence belongs to the alpha-IPM synthase/homocitrate synthase family. LeuA type 1 subfamily. As to quaternary structure, homodimer. Requires Mn(2+) as cofactor.

The protein localises to the cytoplasm. The catalysed reaction is 3-methyl-2-oxobutanoate + acetyl-CoA + H2O = (2S)-2-isopropylmalate + CoA + H(+). It functions in the pathway amino-acid biosynthesis; L-leucine biosynthesis; L-leucine from 3-methyl-2-oxobutanoate: step 1/4. Its function is as follows. Catalyzes the condensation of the acetyl group of acetyl-CoA with 3-methyl-2-oxobutanoate (2-ketoisovalerate) to form 3-carboxy-3-hydroxy-4-methylpentanoate (2-isopropylmalate). The polypeptide is 2-isopropylmalate synthase (Solidesulfovibrio magneticus (strain ATCC 700980 / DSM 13731 / RS-1) (Desulfovibrio magneticus)).